We begin with the raw amino-acid sequence, 209 residues long: Protease (209 aa).

Catalysis depends on residues His-60, Asp-77, and Cys-127.

This sequence belongs to the peptidase C5 family. Interacts with protease cofactor pVI-C; this interaction is necessary for protease activation.

The protein resides in the virion. It is found in the host nucleus. The enzyme catalyses Cleaves proteins of the adenovirus and its host cell at two consensus sites: -Yaa-Xaa-Gly-Gly-|-Xaa- and -Yaa-Xaa-Gly-Xaa-|-Gly- (in which Yaa is Met, Ile or Leu, and Xaa is any amino acid).. Requires DNA and protease cofactor for maximal activation. Inside nascent virions, becomes partially activated by binding to the viral DNA, allowing it to cleave the cofactor that binds to the protease and fully activates it. Actin, like the viral protease cofactor, seems to act as a cofactor in the cleavage of cytokeratin 18 and of actin itself. In terms of biological role, cleaves viral precursor proteins (pTP, pIIIa, pVI, pVII, pVIII, and pX) inside newly assembled particles giving rise to mature virions. Protease complexed to its cofactor slides along the viral DNA to specifically locate and cleave the viral precursors. Mature virions have a weakened organization compared to the unmature virions, thereby facilitating subsequent uncoating. Without maturation, the particle lacks infectivity and is unable to uncoat. Late in adenovirus infection, in the cytoplasm, may participate in the cytoskeleton destruction. Cleaves host cell cytoskeletal keratins K7 and K18. This Homo sapiens (Human) protein is Protease.